Reading from the N-terminus, the 496-residue chain is Fusarielin biosynthesis cluster transcription factor FSL7 (496 aa).

A DNA-binding region (zn(2)-C6 fungal-type) is located at residues 16–46; sequence CDRCHELKIRCTRTGGTESRCDRCEKNDIDC. 5 disordered regions span residues 57 to 102, 189 to 224, 281 to 307, 348 to 379, and 444 to 470; these read PKSQ…SINS, RSINHRSGSENESMEGNAELQSTQSASGSPQEEDQM, ANHTSSSSSSNSTTVDGPSEIRNQSRS, GSTSSSTYNDTTAHPSSASLPSQTGGPTKPRT, and MTREQHVSTGHGPDRHTSPVLSSAQAA. Polar residues-rich tracts occupy residues 65–89 and 207–218; these read GPNTTARQNDTTTRGRIQQEQQEQM and ELQSTQSASGSP. The segment covering 281–294 has biased composition (low complexity); sequence ANHTSSSSSSNSTT. The segment covering 355–379 has biased composition (polar residues); that stretch reads YNDTTAHPSSASLPSQTGGPTKPRT. Residues 444–460 are compositionally biased toward basic and acidic residues; it reads MTREQHVSTGHGPDRHT.

The protein localises to the nucleus. Transcription regulator that specifically up-regulates the gene cluster that mediates the biosynthesis of fusarielins F, G and H, decaketide compounds with 5 methylations and a decaline core that act as mycoestrogens as they stimulate growth of MCF-7 breast cancer cells. Probably binds the 5'-CGGNNNCCG-3' motif present in the promoter of all the cluster genes. This is Fusarielin biosynthesis cluster transcription factor FSL7 from Gibberella zeae (strain ATCC MYA-4620 / CBS 123657 / FGSC 9075 / NRRL 31084 / PH-1) (Wheat head blight fungus).